Here is a 249-residue protein sequence, read N- to C-terminus: Thioesterase TesA (249 aa).

Residues S92, D196, and H224 contribute to the active site.

This sequence belongs to the thioesterase family.

It carries out the reaction a fatty acyl-CoA + H2O = a fatty acid + CoA + H(+). Its function is as follows. Involved in the synthesis of both phthiocerol dimycocerosates (PDIMs) and phenolic glycolipids (PGLs), which are structurally related lipids non-covalently bound to the outer cell wall layer of M.tuberculosis and are important virulence factors. The protein is Thioesterase TesA of Mycobacterium marinum (strain ATCC BAA-535 / M).